A 416-amino-acid chain; its full sequence is Tyrosine-protein phosphatase non-receptor type 2 (416 aa).

In terms of domain architecture, Tyrosine-protein phosphatase spans 5 to 275; the sequence is IEREFEELDA…RFSYMAIIEG (271 aa). Tyrosine 22 carries the phosphotyrosine modification. Serine 52 bears the Phosphoserine mark. Tyrosine 68 is subject to Phosphotyrosine. Residues aspartate 182, 216–222, and glutamine 260 contribute to the substrate site; that span reads CSAGIGR. Cysteine 216 serves as the catalytic Phosphocysteine intermediate. Cysteine 216 bears the S-nitrosocysteine mark. Residues serine 293, serine 298, serine 304, serine 320, and serine 339 each carry the phosphoserine modification. The endoplasmic reticulum location stretch occupies residues 341-410; sequence ESILRKRIRE…WTLLFQLNVL (70 aa). The segment at 371–410 is may mediate interaction with STX17; the sequence is ERKRKRWLYWQPILTKMGFVSVILVGALVGWTLLFQLNVL.

The protein belongs to the protein-tyrosine phosphatase family. Non-receptor class 1 subfamily. Interacts with RMDN3. Interacts with TMED9. Interacts with STX17; dephosphorylates STX17. Interacts with ITGA1 (via cytoplasmic domain); activates the phosphatase activity towards EGFR. Interacts with TRAF2; probably involved in tumor necrosis factor-mediated signaling. Interacts with MET. Interacts with FAM220A and STAT3; interaction with FAM220A promotes interaction of PTPN2 with transcriptional activator STAT3, leading to dephosphorylation of STAT3 by PTPN2 and negative regulation of STAT3 transcriptional activator activity. Post-translationally, specifically phosphorylated in a cell cycle-dependent manner by cyclin-dependent kinases CDK1 and CDK2. Probably activated through phosphorylation by PKR. In terms of tissue distribution, does not show tissue- or cell-type specificity although levels of transcription show variability. Macrophages showed higher levels of expression than lymphocytes.

It is found in the cytoplasm. It localises to the endoplasmic reticulum-Golgi intermediate compartment. The protein resides in the endoplasmic reticulum. The protein localises to the nucleus membrane. Its subcellular location is the nucleus. It is found in the cell membrane. It carries out the reaction O-phospho-L-tyrosyl-[protein] + H2O = L-tyrosyl-[protein] + phosphate. Non-receptor type tyrosine-specific phosphatase that dephosphorylates receptor protein tyrosine kinases including INSR, EGFR, CSF1R, PDGFR. Also dephosphorylates non-receptor protein tyrosine kinases like JAK1, JAK2, JAK3, Src family kinases, STAT1, STAT3 and STAT6 either in the nucleus or the cytoplasm. Negatively regulates numerous signaling pathways and biological processes like hematopoiesis, inflammatory response, cell proliferation and differentiation, and glucose homeostasis. Plays a multifaceted and important role in the development of the immune system. Functions in T-cell receptor signaling through dephosphorylation of FYN and LCK to control T-cells differentiation and activation. Dephosphorylates CSF1R, negatively regulating its downstream signaling and macrophage differentiation. Negatively regulates cytokine (IL2/interleukin-2 and interferon)-mediated signaling through dephosphorylation of the cytoplasmic kinases JAK1, JAK3 and their substrate STAT1, that propagate signaling downstream of the cytokine receptors. Also regulates the IL6/interleukin-6 and IL4/interleukin-4 cytokine signaling through dephosphorylation of STAT3 and STAT6 respectively. In addition to the immune system, it is involved in anchorage-dependent, negative regulation of EGF-stimulated cell growth. Activated by the integrin ITGA1/ITGB1, it dephosphorylates EGFR and negatively regulates EGF signaling. Dephosphorylates PDGFRB and negatively regulates platelet-derived growth factor receptor-beta signaling pathway and therefore cell proliferation. Negatively regulates tumor necrosis factor-mediated signaling downstream via MAPK through SRC dephosphorylation. May also regulate the hepatocyte growth factor receptor signaling pathway through dephosphorylation of the hepatocyte growth factor receptor MET. Also plays an important role in glucose homeostasis. For instance, negatively regulates the insulin receptor signaling pathway through the dephosphorylation of INSR and control gluconeogenesis and liver glucose production through negative regulation of the IL6 signaling pathways. May also bind DNA. The sequence is that of Tyrosine-protein phosphatase non-receptor type 2 (Ptpn2) from Rattus norvegicus (Rat).